The sequence spans 121 residues: Large ribosomal subunit protein uL14c (121 aa).

Belongs to the universal ribosomal protein uL14 family. As to quaternary structure, part of the 50S ribosomal subunit.

It localises to the plastid. The protein localises to the chloroplast. Functionally, binds to 23S rRNA. In Trieres chinensis (Marine centric diatom), this protein is Large ribosomal subunit protein uL14c.